The sequence spans 648 residues: Transcription termination factor FttA (648 aa).

Positions 1–179 are not required for dimerization, required for cleavage at some sites; the sequence is MIKRETQVDQ…QVGRNIYRKP (179 aa). Positions 9 to 76 are KHa; it reads DQILKDIRGI…ISIRPDPDVL (68 aa). A KHb region spans residues 77–144; the sequence is LPPEEAEKLI…WAPKVVRTPP (68 aa). The metallo-beta-lactamase N-terminus stretch occupies residues 185–395; it reads WIRITGLGGF…LVMESTYGGA (211 aa). Residues His-253, His-255, Asp-257, His-258, His-341, and Asp-364 each contribute to the Zn(2+) site. The segment at 396–589 is beta-Casp; that stretch reads NDIQMPREEA…MEVHTIDGFS (194 aa). The metallo-beta-lactamase C-terminus stretch occupies residues 590 to 648; that stretch reads GHADRRELMNYVAKVRPRPERVITVHGEPQKCLDLATSIHRKFGLSTRAPNNLDTIRLR. His-615 provides a ligand contact to Zn(2+).

Belongs to the metallo-beta-lactamase superfamily. RNA-metabolizing metallo-beta-lactamase-like family. FttA subfamily. In terms of assembly, homodimer. Interacts with RNA polymerase (RNAP), interacts with the Spt4-Spt5 complex. It depends on Zn(2+) as a cofactor.

With respect to regulation, endoRNase activity is inhibited by 1,10-phenanthroline. Functionally, terminates transcription on the whole genome. Termination is linked to FttA-mediated RNA cleavage and does not require NTP hydrolysis. Cleaves endonucleolytically at the RNA exit channel of RNA polymerase (RNAP); the 5'-3' exonuclease activity of this protein degrades the nascent RNA released from RNAP. A single-stranded endoribonuclease (endoRNase) with a preference for cleavage at CA dinucleotides. Has 5'-3' exoribonuclease (exoRNase) activity on 5'-monophosphorylated RNA; this activity does not occur on 5'-tri-phosphorylated or 5'-OH substrates. Also has weak activity 5'-3' exodeoxyribonuclease activity on ssDNA. In Pyrococcus abyssi (strain GE5 / Orsay), this protein is Transcription termination factor FttA.